A 418-amino-acid chain; its full sequence is Thyroxine-binding globulin (418 aa).

The N-terminal stretch at 1 to 20 (MSVFFYLFVLVFGLQATIHC) is a signal peptide. Residues asparagine 24, asparagine 39, asparagine 102, asparagine 168, asparagine 227, and asparagine 256 are each glycosylated (N-linked (GlcNAc...) asparagine). Thyroxine contacts are provided by asparagine 296 and lysine 401.

The protein belongs to the serpin family.

It localises to the secreted. Major thyroid hormone transport protein in serum. This chain is Thyroxine-binding globulin (Serpina7), found in Mus musculus (Mouse).